A 104-amino-acid chain; its full sequence is Type IV secretion system protein PtlB homolog (104 aa).

The helical transmembrane segment at 30–50 (IALLGIWFSIAFLALFPVALL) threads the bilayer.

The protein belongs to the virB3 family.

The protein localises to the cell membrane. The chain is Type IV secretion system protein PtlB homolog (ptlB) from Bordetella bronchiseptica (strain ATCC BAA-588 / NCTC 13252 / RB50) (Alcaligenes bronchisepticus).